Here is a 342-residue protein sequence, read N- to C-terminus: N-acetyl-gamma-glutamyl-phosphate reductase (342 aa).

The active site involves cysteine 148.

Belongs to the NAGSA dehydrogenase family. Type 1 subfamily.

The protein resides in the cytoplasm. The enzyme catalyses N-acetyl-L-glutamate 5-semialdehyde + phosphate + NADP(+) = N-acetyl-L-glutamyl 5-phosphate + NADPH + H(+). The protein operates within amino-acid biosynthesis; L-arginine biosynthesis; N(2)-acetyl-L-ornithine from L-glutamate: step 3/4. In terms of biological role, catalyzes the NADPH-dependent reduction of N-acetyl-5-glutamyl phosphate to yield N-acetyl-L-glutamate 5-semialdehyde. This Methanococcus vannielii (strain ATCC 35089 / DSM 1224 / JCM 13029 / OCM 148 / SB) protein is N-acetyl-gamma-glutamyl-phosphate reductase.